Here is a 404-residue protein sequence, read N- to C-terminus: Argininosuccinate synthase (404 aa).

ATP is bound by residues 10–18 (AYSGGVDTS) and Ala38. Position 89 (Tyr89) interacts with L-citrulline. Residue Gly119 participates in ATP binding. L-aspartate is bound by residues Thr121, Asn125, and Asp126. Asn125 is an L-citrulline binding site. L-citrulline is bound by residues Arg129, Ser177, Ser186, Glu262, and Tyr274.

Belongs to the argininosuccinate synthase family. Type 1 subfamily. As to quaternary structure, homotetramer.

The protein localises to the cytoplasm. It carries out the reaction L-citrulline + L-aspartate + ATP = 2-(N(omega)-L-arginino)succinate + AMP + diphosphate + H(+). It participates in amino-acid biosynthesis; L-arginine biosynthesis; L-arginine from L-ornithine and carbamoyl phosphate: step 2/3. In Prochlorococcus marinus (strain MIT 9301), this protein is Argininosuccinate synthase.